The primary structure comprises 798 residues: Protocadherin beta-10 (798 aa).

The first 26 residues, Met-1–Ala-26, serve as a signal peptide directing secretion. Residues Gly-27–Leu-690 lie on the Extracellular side of the membrane. Cadherin domains follow at residues Val-35 to Phe-133, Thr-138 to Phe-242, Tyr-247 to Leu-347, Phe-352 to Phe-451, and Tyr-456 to Val-561. N-linked (GlcNAc...) asparagine glycosylation is present at Asn-169. N-linked (GlcNAc...) asparagine glycosylation is found at Asn-418 and Asn-436. N-linked (GlcNAc...) asparagine glycosylation occurs at Asn-567. Residues Gly-568–Leu-671 enclose the Cadherin 6 domain. The chain crosses the membrane as a helical span at residues Val-691–Val-711. Topologically, residues Arg-712–Gln-798 are cytoplasmic.

It is found in the cell membrane. In terms of biological role, potential calcium-dependent cell-adhesion protein. May be involved in the establishment and maintenance of specific neuronal connections in the brain. The polypeptide is Protocadherin beta-10 (PCDHB10) (Pan troglodytes (Chimpanzee)).